Reading from the N-terminus, the 218-residue chain is Grancalcin (218 aa).

4 consecutive EF-hand domains span residues Ser49–Ser84, Gly85–Trp119, Ser120–Arg155, and Leu156–Asp191. Positions 103, 105, 107, 109, 133, 135, 137, 139, and 144 each coordinate Ca(2+).

In terms of assembly, homodimer. Interacts with SRI and LCP1.

The protein localises to the cytoplasm. It is found in the cytoplasmic granule membrane. In terms of biological role, calcium-binding protein that may play a role in the adhesion of neutrophils to fibronectin. May play a role in the formation of focal adhesions. This is Grancalcin (GCA) from Pongo abelii (Sumatran orangutan).